The chain runs to 214 residues: Probable transaldolase (214 aa).

K83 acts as the Schiff-base intermediate with substrate in catalysis.

The protein belongs to the transaldolase family. Type 3B subfamily.

The protein resides in the cytoplasm. It catalyses the reaction D-sedoheptulose 7-phosphate + D-glyceraldehyde 3-phosphate = D-erythrose 4-phosphate + beta-D-fructose 6-phosphate. It functions in the pathway carbohydrate degradation; pentose phosphate pathway; D-glyceraldehyde 3-phosphate and beta-D-fructose 6-phosphate from D-ribose 5-phosphate and D-xylulose 5-phosphate (non-oxidative stage): step 2/3. Functionally, transaldolase is important for the balance of metabolites in the pentose-phosphate pathway. The chain is Probable transaldolase from Geotalea daltonii (strain DSM 22248 / JCM 15807 / FRC-32) (Geobacter daltonii).